The primary structure comprises 132 residues: uncharacterized protein (132 aa).

This is an uncharacterized protein from Mycoplasma genitalium (strain ATCC 33530 / DSM 19775 / NCTC 10195 / G37) (Mycoplasmoides genitalium).